Here is a 287-residue protein sequence, read N- to C-terminus: Zinc finger protein SNAI3 (287 aa).

Residues 1–20 (MPRSFLVKTHSSHRVPNYGK) are SNAG domain. 4 consecutive C2H2-type zinc fingers follow at residues 147–169 (FECI…QQLH), 178–200 (FTCR…IRTH), 204–226 (CICK…IRTH), and 232–254 (YTCS…LQTH). Residues 260 to 282 (YRCAVCPKAFSRMSLLARHEEAG) form a C2H2-type 5; degenerate zinc finger.

This sequence belongs to the snail C2H2-type zinc-finger protein family. In terms of tissue distribution, highly expressed in skeletal muscle and thymus. Lower expression in heart, lung and spleen.

It is found in the nucleus. Seems to inhibit myoblast differentiation. Transcriptional repressor of E-box-dependent transactivation of downstream myogenic bHLHs genes. Binds preferentially to the canonical E-box sequences 5'-CAGGTG-3' and 5'-CACCTG-3'. The polypeptide is Zinc finger protein SNAI3 (Snai3) (Mus musculus (Mouse)).